The sequence spans 124 residues: MPKDFPRARRVADQIQRELPELIRQEVKDPRVGMLTITEVEVNRDMEFAKVYFTTMGGEAEHAACLQGLQRASGFLRSQLSHRMQLRVVPKLTFVYDRSVEHGMALSRLIETAVAEDAKHPKDE.

This sequence belongs to the RbfA family. Monomer. Binds 30S ribosomal subunits, but not 50S ribosomal subunits or 70S ribosomes.

The protein resides in the cytoplasm. Functionally, one of several proteins that assist in the late maturation steps of the functional core of the 30S ribosomal subunit. Associates with free 30S ribosomal subunits (but not with 30S subunits that are part of 70S ribosomes or polysomes). Required for efficient processing of 16S rRNA. May interact with the 5'-terminal helix region of 16S rRNA. The chain is Ribosome-binding factor A from Thiobacillus denitrificans (strain ATCC 25259 / T1).